The primary structure comprises 193 residues: Xanthine phosphoribosyltransferase (193 aa).

Xanthine contacts are provided by Leu-20 and Asn-27. Position 128-132 (128-132 (ANGDA)) interacts with 5-phospho-alpha-D-ribose 1-diphosphate. Lys-156 is a binding site for xanthine.

This sequence belongs to the purine/pyrimidine phosphoribosyltransferase family. Xpt subfamily. In terms of assembly, homodimer.

It localises to the cytoplasm. It carries out the reaction XMP + diphosphate = xanthine + 5-phospho-alpha-D-ribose 1-diphosphate. Its pathway is purine metabolism; XMP biosynthesis via salvage pathway; XMP from xanthine: step 1/1. In terms of biological role, converts the preformed base xanthine, a product of nucleic acid breakdown, to xanthosine 5'-monophosphate (XMP), so it can be reused for RNA or DNA synthesis. The sequence is that of Xanthine phosphoribosyltransferase from Staphylococcus haemolyticus (strain JCSC1435).